Reading from the N-terminus, the 349-residue chain is Hyaluronidase Tab y 2.0101 (349 aa).

Positions 1–25 (MKLHQGLVCLSVLILLPTCILGDRK) are cleaved as a signal peptide. 2 disulfides stabilise this stretch: Cys-37–Cys-328 and Cys-205–Cys-216. N-linked (GlcNAc...) asparagine glycosylation is found at Asn-41, Asn-81, Asn-99, and Asn-119. Glu-129 serves as the catalytic Proton donor. N-linked (GlcNAc...) asparagine glycosylation is present at Asn-147. N-linked (GlcNAc...) asparagine glycans are attached at residues Asn-251 and Asn-297.

This sequence belongs to the glycosyl hydrolase 56 family. Expressed in salivary glands.

It localises to the secreted. The catalysed reaction is Random hydrolysis of (1-&gt;4)-linkages between N-acetyl-beta-D-glucosamine and D-glucuronate residues in hyaluronate.. Hydrolyzes high molecular weight hyaluronic acid to produce small oligosaccharides. The chain is Hyaluronidase Tab y 2.0101 from Tabanus yao (Horsefly).